The following is a 309-amino-acid chain: Elongation factor Ts (309 aa).

Residues 82 to 85 are involved in Mg(2+) ion dislocation from EF-Tu; that stretch reads TDFV.

It belongs to the EF-Ts family.

It is found in the cytoplasm. Functionally, associates with the EF-Tu.GDP complex and induces the exchange of GDP to GTP. It remains bound to the aminoacyl-tRNA.EF-Tu.GTP complex up to the GTP hydrolysis stage on the ribosome. The sequence is that of Elongation factor Ts from Rickettsia felis (strain ATCC VR-1525 / URRWXCal2) (Rickettsia azadi).